A 176-amino-acid chain; its full sequence is Large ribosomal subunit protein uL22z (176 aa).

The span at 154-163 (KEEPVKKEPE) shows a compositional bias: basic and acidic residues. A disordered region spans residues 154–176 (KEEPVKKEPETQLAAKSKKGASS).

It belongs to the universal ribosomal protein uL22 family.

This is Large ribosomal subunit protein uL22z (RPL17A) from Arabidopsis thaliana (Mouse-ear cress).